Reading from the N-terminus, the 308-residue chain is Apolipoprotein E (308 aa).

Residues 1–18 form the signal peptide; that stretch reads MKFLWAALVVTLLAGCRA. 8 tandem repeats follow at residues 75–96, 97–118, 119–140, 141–162, 163–184, 185–206, 207–224, and 225–246. An 8 X 22 AA approximate tandem repeats region spans residues 75–246; the sequence is LLIEETMKEV…RLDDMRDQME (172 aa). The segment at 153-163 is LDL and other lipoprotein receptors binding; that stretch reads HLRKLRKRLLR. Residue 157–160 participates in heparin binding; the sequence is LRKR. The segment at 205–281 is lipid-binding and lipoprotein association; that stretch reads AIPPSQQLRE…SWFEPLVQDM (77 aa). 220–227 serves as a coordination point for heparin; sequence GQKVRGRL. The tract at residues 257 to 308 is homooligomerization; sequence SQVRLQAEAFQTRLKSWFEPLVQDMQRQWASLVEKVQSTLGISPSTKPSKTK. Residues 269–281 form a specificity for association with VLDL region; sequence RLKSWFEPLVQDM.

It belongs to the apolipoprotein A1/A4/E family. In terms of assembly, homotetramer. May interact with ABCA1; functionally associated with ABCA1 in the biogenesis of HDLs. May interact with APP/A4 amyloid-beta peptide; the interaction is extremely stable in vitro but its physiological significance is unclear. May interact with MAPT. May interact with MAP2. In the cerebrospinal fluid, interacts with secreted SORL1. Interacts with PMEL; this allows the loading of PMEL luminal fragment on ILVs to induce fibril nucleation. Post-translationally, APOE exists as multiple glycosylated and sialylated glycoforms within cells and in plasma. The extent of glycosylation and sialylation are tissue and context specific. In terms of processing, glycated in plasma VLDL. Phosphorylated by FAM20C in the extracellular medium.

Its subcellular location is the secreted. It is found in the extracellular space. It localises to the extracellular matrix. The protein resides in the extracellular vesicle. The protein localises to the endosome. Its subcellular location is the multivesicular body. In terms of biological role, APOE is an apolipoprotein, a protein associating with lipid particles, that mainly functions in lipoprotein-mediated lipid transport between organs via the plasma and interstitial fluids. APOE is a core component of plasma lipoproteins and is involved in their production, conversion and clearance. Apolipoproteins are amphipathic molecules that interact both with lipids of the lipoprotein particle core and the aqueous environment of the plasma. As such, APOE associates with chylomicrons, chylomicron remnants, very low density lipoproteins (VLDL) and intermediate density lipoproteins (IDL) but shows a preferential binding to high-density lipoproteins (HDL). It also binds a wide range of cellular receptors including the LDL receptor/LDLR and the very low-density lipoprotein receptor/VLDLR that mediate the cellular uptake of the APOE-containing lipoprotein particles. Finally, APOE also has a heparin-binding activity and binds heparan-sulfate proteoglycans on the surface of cells, a property that supports the capture and the receptor-mediated uptake of APOE-containing lipoproteins by cells. This chain is Apolipoprotein E (APOE), found in Pteropus pselaphon (Bonin flying fox).